The following is a 105-amino-acid chain: Small ribosomal subunit protein uS10 (105 aa).

Belongs to the universal ribosomal protein uS10 family. In terms of assembly, part of the 30S ribosomal subunit.

Functionally, involved in the binding of tRNA to the ribosomes. In Desulfotalea psychrophila (strain LSv54 / DSM 12343), this protein is Small ribosomal subunit protein uS10.